The chain runs to 188 residues: Glandular kallikrein-3, submandibular (188 aa).

The 185-residue stretch at 1-185 folds into the Peptidase S1 domain; that stretch reads NYHVLLGQNN…FTSWIKEVMK (185 aa). 2 N-linked (GlcNAc...) asparagine glycosylation sites follow: Asn-10 and Asn-36. Asp-47 functions as the Charge relay system in the catalytic mechanism. 3 disulfide bridges follow: Cys-79-Cys-146, Cys-111-Cys-125, and Cys-136-Cys-161. Catalysis depends on Ser-140, which acts as the Charge relay system.

This sequence belongs to the peptidase S1 family. Kallikrein subfamily.

It carries out the reaction Preferential cleavage of Arg-|-Xaa bonds in small molecule substrates. Highly selective action to release kallidin (lysyl-bradykinin) from kininogen involves hydrolysis of Met-|-Xaa or Leu-|-Xaa.. In terms of biological role, glandular kallikreins cleave Met-Lys and Arg-Ser bonds in kininogen to release Lys-bradykinin. The polypeptide is Glandular kallikrein-3, submandibular (Klk3) (Rattus norvegicus (Rat)).